The sequence spans 244 residues: MKIEVCIDNIESVHIAQNAGADRLELCACLSVGGVTPSYSLIKSAVDFANIPCYVMIRPRAGDFLFSTQEVNMMLDDIHLAKQLGAQGIVIGALTKHADIDLSVCETLIQAAEGLGVTFHRAFDLCRDPVTSLEQLIQLGCERVLTSGQKASAVEGQPLIKQLVSQASNRIRIMAGAGINAQNAALLVKNTGITELHLSGKGYRLSEMPYHANAVMGENSEDDQKIWRTDFATIRAVKTSVEKY.

Belongs to the CutC family.

It localises to the cytoplasm. The chain is PF03932 family protein CutC from Pasteurella multocida (strain Pm70).